The chain runs to 293 residues: NAD-dependent protein deacetylase (293 aa).

Positions 1–284 (MTVAITQTGP…QPPDPLHTAT (284 aa)) constitute a Deacetylase sirtuin-type domain. NAD(+)-binding positions include 27–47 (GAGCSTDSGIPDYRDLHGGWK) and 105–108 (QNVD). Residue histidine 123 is the Proton acceptor of the active site. Residues cysteine 131, cysteine 134, cysteine 182, and cysteine 185 each contribute to the Zn(2+) site. NAD(+) is bound by residues 222-224 (GSS), 248-250 (NFG), and cysteine 266.

It belongs to the sirtuin family. Class II subfamily. Zn(2+) serves as cofactor.

It localises to the cytoplasm. It catalyses the reaction N(6)-acetyl-L-lysyl-[protein] + NAD(+) + H2O = 2''-O-acetyl-ADP-D-ribose + nicotinamide + L-lysyl-[protein]. Functionally, NAD-dependent protein deacetylase which modulates the activities of several enzymes which are inactive in their acetylated form. The sequence is that of NAD-dependent protein deacetylase from Xanthomonas campestris pv. campestris (strain B100).